Here is a 361-residue protein sequence, read N- to C-terminus: Alanine racemase (361 aa).

The active-site Proton acceptor; specific for D-alanine is Lys34. An N6-(pyridoxal phosphate)lysine modification is found at Lys34. Arg129 serves as a coordination point for substrate. Catalysis depends on Tyr256, which acts as the Proton acceptor; specific for L-alanine. Met304 provides a ligand contact to substrate.

This sequence belongs to the alanine racemase family. As to quaternary structure, homodimer. It depends on pyridoxal 5'-phosphate as a cofactor.

The enzyme catalyses L-alanine = D-alanine. It participates in amino-acid biosynthesis; D-alanine biosynthesis; D-alanine from L-alanine: step 1/1. Catalyzes the interconversion of L-alanine and D-alanine. May also act on other amino acids. This Corynebacterium glutamicum (strain ATCC 13032 / DSM 20300 / JCM 1318 / BCRC 11384 / CCUG 27702 / LMG 3730 / NBRC 12168 / NCIMB 10025 / NRRL B-2784 / 534) protein is Alanine racemase (alr).